A 344-amino-acid polypeptide reads, in one-letter code: Glyceraldehyde-3-phosphate dehydrogenase (344 aa).

Residues 11 to 12 and Gly-110 contribute to the NAD(+) site; that span reads TI. Residue 139–141 coordinates D-glyceraldehyde 3-phosphate; sequence SCN. Catalysis depends on Cys-140, which acts as the Nucleophile. Position 169 (Arg-169) interacts with NAD(+). A D-glyceraldehyde 3-phosphate-binding site is contributed by 195–196; the sequence is HG. An NAD(+)-binding site is contributed by Gln-302.

The protein belongs to the glyceraldehyde-3-phosphate dehydrogenase family. Homotetramer.

The protein resides in the cytoplasm. The catalysed reaction is D-glyceraldehyde 3-phosphate + phosphate + NADP(+) = (2R)-3-phospho-glyceroyl phosphate + NADPH + H(+). The enzyme catalyses D-glyceraldehyde 3-phosphate + phosphate + NAD(+) = (2R)-3-phospho-glyceroyl phosphate + NADH + H(+). The protein operates within carbohydrate degradation; glycolysis; pyruvate from D-glyceraldehyde 3-phosphate: step 1/5. In Pyrobaculum arsenaticum (strain DSM 13514 / JCM 11321 / PZ6), this protein is Glyceraldehyde-3-phosphate dehydrogenase.